The chain runs to 35 residues: Conotoxin Ca15a (35 aa).

4-hydroxyproline is present on proline 8.

In terms of processing, contains 4 disulfide bonds. As to expression, expressed by the venom duct.

The protein localises to the secreted. This is Conotoxin Ca15a from Conus caracteristicus (Characteristic cone).